An 845-amino-acid polypeptide reads, in one-letter code: G-type lectin S-receptor-like serine/threonine-protein kinase At1g11410 (845 aa).

The N-terminal stretch at 1 to 21 (MKFFFIFFIFLFSFLIQSCYS) is a signal peptide. The region spanning 22 to 147 (DNTILRSQSL…VTGKSFWESF (126 aa)) is the Bulb-type lectin domain. The Extracellular segment spans residues 22-441 (DNTILRSQSL…NGNGASGKKR (420 aa)). Residues asparagine 82, asparagine 103, asparagine 185, asparagine 231, and asparagine 259 are each glycosylated (N-linked (GlcNAc...) asparagine). An EGF-like domain is found at 283-321 (PEDKCDIYNHCGFNGYCDSTSTEKFECSCLPGYEPKTPR). Intrachain disulfides connect cysteine 287-cysteine 299 and cysteine 293-cysteine 309. In terms of domain architecture, PAN spans 341–424 (CNGKEGFAKL…SGQDFYLRVD (84 aa)). 3 N-linked (GlcNAc...) asparagine glycosylation sites follow: asparagine 357, asparagine 366, and asparagine 379. Disulfide bonds link cysteine 372–cysteine 399 and cysteine 376–cysteine 382. The helical transmembrane segment at 442 to 462 (LVLILISLIAVVMLLLISFHC) threads the bilayer. The Cytoplasmic portion of the chain corresponds to 463-845 (YLRKRRQRTQ…DVTLTDVQGR (383 aa)). Residues 523–808 (FAFQNKLGAG…DLPSPKHPAF (286 aa)) enclose the Protein kinase domain. ATP-binding positions include 529–537 (LGAGGFGPV) and lysine 551. The interval 612–629 (EQRAELDWPKRMGIIRGI) is caM-binding. Aspartate 648 functions as the Proton acceptor in the catalytic mechanism. The segment at 803-845 (PKHPAFTAGRRRNTKTGGSSDNWPSGETSSTINDVTLTDVQGR) is disordered. The segment covering 817–845 (KTGGSSDNWPSGETSSTINDVTLTDVQGR) has biased composition (polar residues).

This sequence belongs to the protein kinase superfamily. Ser/Thr protein kinase family.

It localises to the cell membrane. It catalyses the reaction L-seryl-[protein] + ATP = O-phospho-L-seryl-[protein] + ADP + H(+). It carries out the reaction L-threonyl-[protein] + ATP = O-phospho-L-threonyl-[protein] + ADP + H(+). In Arabidopsis thaliana (Mouse-ear cress), this protein is G-type lectin S-receptor-like serine/threonine-protein kinase At1g11410.